The primary structure comprises 1334 residues: Aldehyde oxidase 4 (1334 aa).

The region spanning 6-93 (DELIFFVNGK…GAAVTTVEGV (88 aa)) is the 2Fe-2S ferredoxin-type domain. [2Fe-2S] cluster is bound by residues cysteine 45, cysteine 50, cysteine 53, and cysteine 75. Glutamine 114 is a binding site for Mo-molybdopterin. Residues cysteine 115, cysteine 118, cysteine 150, and cysteine 152 each coordinate [2Fe-2S] cluster. Cysteine 152 contributes to the Mo-molybdopterin binding site. An FAD-binding PCMH-type domain is found at 235–421 (FQGERTIWIM…LSVFIPYSGQ (187 aa)). FAD-binding positions include 263–270 (LVMGNTAV), alanine 345, threonine 354, histidine 358, aspartate 367, and alanine 411. Mo-molybdopterin contacts are provided by residues alanine 802, 802–803 (AF), leucine 1043, 1084–1087 (GSMG), glutamine 1199, and leucine 1263. Glutamate 1265 functions as the Proton acceptor; for azaheterocycle hydroxylase activity in the catalytic mechanism.

It belongs to the xanthine dehydrogenase family. In terms of assembly, homodimer. It depends on [2Fe-2S] cluster as a cofactor. The cofactor is FAD. Mo-molybdopterin is required as a cofactor.

Its subcellular location is the cytoplasm. The catalysed reaction is an aldehyde + O2 + H2O = a carboxylate + H2O2 + H(+). It carries out the reaction retinal + O2 + H2O = retinoate + H2O2 + H(+). In terms of biological role, aldehyde oxidase able to catalyze the oxidation of retinaldehyde into retinoate. Acts as a negative modulator of the epidermal trophism. May be able to oxidize a wide variety of aldehydes into their corresponding carboxylates and to hydroxylate azaheterocycles. This chain is Aldehyde oxidase 4 (Aox4), found in Rattus norvegicus (Rat).